Consider the following 349-residue polypeptide: Succinylglutamate desuccinylase (349 aa).

H70, E73, and H166 together coordinate Zn(2+). E229 is an active-site residue.

The protein belongs to the AspA/AstE family. Succinylglutamate desuccinylase subfamily. The cofactor is Zn(2+).

It catalyses the reaction N-succinyl-L-glutamate + H2O = L-glutamate + succinate. Its pathway is amino-acid degradation; L-arginine degradation via AST pathway; L-glutamate and succinate from L-arginine: step 5/5. Transforms N(2)-succinylglutamate into succinate and glutamate. In Burkholderia thailandensis (strain ATCC 700388 / DSM 13276 / CCUG 48851 / CIP 106301 / E264), this protein is Succinylglutamate desuccinylase.